The following is a 287-amino-acid chain: Heavy metal-associated isoprenylated plant protein 4 (287 aa).

HMA domains are found at residues 14–80 (IITA…VELI) and 112–176 (IRTT…KHAE). A metal cation is bound by residues Cys25, Cys28, Cys123, and Cys126. Residues 179-235 (SSKTEEEKKKEEEDKKKKEEEDKKKKEDEKKKEEEKKKEEENKKKEGEKKKEEVKVE) are a coiled coil. The interval 181–232 (KTEEEKKKEEEDKKKKEEEDKKKKEDEKKKEEEKKKEEENKKKEGEKKKEEV) is disordered. Cys284 is modified (cysteine methyl ester). Residue Cys284 is the site of S-farnesyl cysteine attachment. Residues 285–287 (RIV) constitute a propeptide, removed in mature form.

The protein belongs to the HIPP family.

In terms of biological role, heavy-metal-binding protein. In Arabidopsis thaliana (Mouse-ear cress), this protein is Heavy metal-associated isoprenylated plant protein 4.